A 537-amino-acid chain; its full sequence is [Pyruvate dehydrogenase [acetyl-transferring]]-phosphatase 1, mitochondrial (537 aa).

The transit peptide at 1–71 directs the protein to the mitochondrion; it reads MPAPTQLFFP…WWHYTQGRRY (71 aa). The PPM-type phosphatase domain maps to 109–525; that stretch reads ILGFDSNQLP…DDITIIVVQF (417 aa). 2 residues coordinate Mn(2+): D144 and G145. An N6-acetyllysine modification is found at K202. Mn(2+) contacts are provided by D418 and D516.

Belongs to the PP2C family. Heterodimer of a catalytic (PDP1) and a regulatory (PDPR) subunit. Requires Mn(2+) as cofactor. The cofactor is Mg(2+).

Its subcellular location is the mitochondrion. The catalysed reaction is O-phospho-L-seryl-[pyruvate dehydrogenase E1 alpha subunit] + H2O = L-seryl-[pyruvate dehydrogenase E1 alpha subunit] + phosphate. With respect to regulation, magnesium-dependent and calcium-stimulated. PDP1 activity strongly depends on its Ca(2+)-dependent binding to the lipoyl domain of E2 subunit of component of the pyruvate dehydrogenase complex. Mitochondrial enzyme that catalyzes the dephosphorylation and concomitant reactivation of the alpha subunit of the E1 component of the pyruvate dehydrogenase complex (PDC), thereby stimulating the conversion of pyruvate into acetyl-CoA. In Pongo abelii (Sumatran orangutan), this protein is [Pyruvate dehydrogenase [acetyl-transferring]]-phosphatase 1, mitochondrial (PDP1).